The following is a 684-amino-acid chain: Pescadillo homolog (684 aa).

The tract at residues 284-352 is disordered; sequence DAAAAEASSN…DSDEEADDEA (69 aa). Residues 285–294 show a composition bias toward low complexity; sequence AAAAEASSNA. A compositionally biased stretch (basic and acidic residues) spans 296–310; sequence TRKDGKKLSTRDVKR. The span at 342-352 shows a compositional bias: acidic residues; that stretch reads QDSDEEADDEA. In terms of domain architecture, BRCT spans 387–486; it reads PLPMLFSRYV…QILPTDPYRP (100 aa). Disordered stretches follow at residues 508–580 and 612–684; these read GYVP…ALLA and AASL…NKKP. Positions 528-543 are enriched in acidic residues; that stretch reads ADEDEDEDEDEDEDED. The segment covering 544–570 has biased composition (basic and acidic residues); the sequence is KAGSGRGDDKNVAAREQDAVEKHDKTP. Positions 612-624 are enriched in basic residues; that stretch reads AASLKSHKKKKRT. Positions 663-675 are enriched in basic and acidic residues; that stretch reads KKKEEKMRLEAKK.

The protein belongs to the pescadillo family. As to quaternary structure, component of the NOP7 complex, composed of ERB1, NOP7 and YTM1. The complex is held together by ERB1, which interacts with NOP7 via its N-terminal domain and with YTM1 via a high-affinity interaction between the seven-bladed beta-propeller domains of the 2 proteins. The NOP7 complex associates with the 66S pre-ribosome.

It is found in the nucleus. Its subcellular location is the nucleolus. The protein localises to the nucleoplasm. Functionally, component of the NOP7 complex, which is required for maturation of the 25S and 5.8S ribosomal RNAs and formation of the 60S ribosome. This Malassezia globosa (strain ATCC MYA-4612 / CBS 7966) (Dandruff-associated fungus) protein is Pescadillo homolog.